Reading from the N-terminus, the 445-residue chain is Ubiquitin carboxyl-terminal hydrolase MINDY-3 (445 aa).

The Nucleophile role is filled by cysteine 51. Serine 125 carries the phosphoserine modification. The active-site Proton acceptor is histidine 287.

It belongs to the MINDY deubiquitinase family. FAM188 subfamily. As to quaternary structure, interacts with COPS5. As to expression, widely expressed with high levels in heart, skeletal muscle, and kidney, and low levels in liver and brain. Also expressed in lung (at protein level).

The protein localises to the nucleus. It catalyses the reaction Thiol-dependent hydrolysis of ester, thioester, amide, peptide and isopeptide bonds formed by the C-terminal Gly of ubiquitin (a 76-residue protein attached to proteins as an intracellular targeting signal).. Hydrolase that can remove 'Lys-48'-linked conjugated ubiquitin from proteins. This Homo sapiens (Human) protein is Ubiquitin carboxyl-terminal hydrolase MINDY-3.